Reading from the N-terminus, the 180-residue chain is ATP-dependent protease subunit HslV (180 aa).

Residue T7 is part of the active site. The Na(+) site is built by G165, C168, and T171.

It belongs to the peptidase T1B family. HslV subfamily. As to quaternary structure, a double ring-shaped homohexamer of HslV is capped on each side by a ring-shaped HslU homohexamer. The assembly of the HslU/HslV complex is dependent on binding of ATP.

It localises to the cytoplasm. The catalysed reaction is ATP-dependent cleavage of peptide bonds with broad specificity.. With respect to regulation, allosterically activated by HslU binding. Functionally, protease subunit of a proteasome-like degradation complex believed to be a general protein degrading machinery. The sequence is that of ATP-dependent protease subunit HslV from Bacillus anthracis (strain A0248).